A 357-amino-acid chain; its full sequence is Peptide chain release factor 1 (357 aa).

Glutamine 232 carries the post-translational modification N5-methylglutamine.

Belongs to the prokaryotic/mitochondrial release factor family. In terms of processing, methylated by PrmC. Methylation increases the termination efficiency of RF1.

It localises to the cytoplasm. Peptide chain release factor 1 directs the termination of translation in response to the peptide chain termination codons UAG and UAA. This is Peptide chain release factor 1 from Oleidesulfovibrio alaskensis (strain ATCC BAA-1058 / DSM 17464 / G20) (Desulfovibrio alaskensis).